The primary structure comprises 83 residues: Mu-theraphotoxin-Hhn2j 3 (83 aa).

The first 21 residues, 1–21 (MKALMFLALAGLVLLFVVGYA), serve as a signal peptide directing secretion. Positions 22 to 48 (SESEEKEFPIELLSKIFAVDVFKGEER) are excised as a propeptide. 3 cysteine pairs are disulfide-bonded: C50/C65, C57/C70, and C64/C77. Leucine amide is present on L81.

This sequence belongs to the neurotoxin 10 (Hwtx-1) family. 15 (Hntx-3) subfamily. In terms of assembly, monomer. In terms of tissue distribution, expressed by the venom gland.

The protein localises to the secreted. Its function is as follows. Lethal neurotoxin. Selectively blocks tetrodotoxin-sensitive voltage-gated sodium channels (Nav). Does not affect tetrodotoxin-resistant voltage-gated sodium channels or calcium channels. The protein is Mu-theraphotoxin-Hhn2j 3 of Cyriopagopus hainanus (Chinese bird spider).